Consider the following 418-residue polypeptide: Type II methyltransferase M.MspI (418 aa).

Positions 105-404 constitute an SAM-dependent MTase C5-type domain; that stretch reads FKFIDLFSGI…EQISLALKTV (300 aa). The active site involves Cys-174.

Belongs to the class I-like SAM-binding methyltransferase superfamily. C5-methyltransferase family.

It catalyses the reaction a 2'-deoxycytidine in DNA + S-adenosyl-L-methionine = a 5-methyl-2'-deoxycytidine in DNA + S-adenosyl-L-homocysteine + H(+). In terms of biological role, a methylase, recognizes the double-stranded sequence 5'-CCGG-3', methylates C-1 on both strands, and protects the DNA from cleavage by the MspI endonuclease. The polypeptide is Type II methyltransferase M.MspI (mspIM) (Moraxella sp).